The chain runs to 530 residues: Ubiquitin carboxyl-terminal hydrolase 17-like protein 18 (530 aa).

The USP domain occupies 80-375 (AGLQNMGNTC…QAYVLFYIQK (296 aa)). The Nucleophile role is filled by Cys-89. His-334 acts as the Proton acceptor in catalysis. 2 stretches are compositionally biased toward basic and acidic residues: residues 382–392 (SESVSRGREPR) and 398–413 (DTDR…RDHP). Disordered regions lie at residues 382–414 (SESV…DHPC) and 509–530 (RGRA…LVCQ). Over residues 510–524 (GRARRSKGKNKHSKR) the composition is skewed to basic residues.

Belongs to the peptidase C19 family. USP17 subfamily.

The protein localises to the nucleus. The protein resides in the endoplasmic reticulum. The catalysed reaction is Thiol-dependent hydrolysis of ester, thioester, amide, peptide and isopeptide bonds formed by the C-terminal Gly of ubiquitin (a 76-residue protein attached to proteins as an intracellular targeting signal).. Functionally, deubiquitinating enzyme that removes conjugated ubiquitin from specific proteins to regulate different cellular processes that may include cell proliferation, progression through the cell cycle, apoptosis, cell migration, and the cellular response to viral infection. This Homo sapiens (Human) protein is Ubiquitin carboxyl-terminal hydrolase 17-like protein 18 (USP17L18).